A 206-amino-acid chain; its full sequence is Na(+)-translocating NADH-quinone reductase subunit E (206 aa).

6 helical membrane passes run 12 to 32, 36 to 56, 85 to 105, 118 to 138, 148 to 168, and 184 to 204; these read AVFVENMALAFFLGMCTFIAI, IQTAIGLGIAVVVVLAITVPV, FLGLLSYIGVIAAIVQILEMT, GIFLPLITVNCAIMGASLFMV, VVYGVGAGVGWALAITLLAGI, and LGITFITVGLMSLGFMSFSGV.

It belongs to the NqrDE/RnfAE family. Composed of six subunits; NqrA, NqrB, NqrC, NqrD, NqrE and NqrF.

It localises to the cell inner membrane. The catalysed reaction is a ubiquinone + n Na(+)(in) + NADH + H(+) = a ubiquinol + n Na(+)(out) + NAD(+). NQR complex catalyzes the reduction of ubiquinone-1 to ubiquinol by two successive reactions, coupled with the transport of Na(+) ions from the cytoplasm to the periplasm. NqrA to NqrE are probably involved in the second step, the conversion of ubisemiquinone to ubiquinol. In Alcanivorax borkumensis (strain ATCC 700651 / DSM 11573 / NCIMB 13689 / SK2), this protein is Na(+)-translocating NADH-quinone reductase subunit E.